The following is an 862-amino-acid chain: Protein JOKA2 (862 aa).

The PB1 domain maps to 6 to 90 (SIVIKVKYEE…NPLRISARLN (85 aa)). A compositionally biased stretch (low complexity) spans 92 to 106 (GERSGRASARSSGNS). Disordered regions lie at residues 92–117 (GERS…VQPP), 194–234 (KGNT…ASNE), and 295–345 (VRNS…DSSG). Residues 325 to 345 (SASSSKVKQCNWDSPNADSSG) are compositionally biased toward polar residues. The ZZ-type; degenerate zinc finger occupies 442-492 (HKGVRCDGCGVHPITGPRFISKVKENYDLCSICFAEMGNDADYIRMDRPLT). Positions 447, 450, 471, and 474 each coordinate Zn(2+). The 50-residue stretch at 811-860 (SVDDLCGVAEWDPILEELKEMGFCDKEMNKKLLKKNNGSIKRVVMDLIAG) folds into the UBA domain. Residues 817–824 (GVAEWDPI) carry the ATG8 interacting motif (AIM) motif.

Interacts (via C-terminal AIM motif) with ATG8CL.

It localises to the vacuole. The protein resides in the cytoplasmic vesicle. Its subcellular location is the autophagosome. Its function is as follows. Autophagic substrate that functions as a host autophagy cargo receptor. Requires ATG8 protein expression to be recognized as an autophagic substrate. Activates ATG8CL-mediated selective autophagy, and contributes to defense against the fungal pathogen Phytophtora infestans. This is Protein JOKA2 from Solanum tuberosum (Potato).